Here is a 1205-residue protein sequence, read N- to C-terminus: Solute carrier family 12 member 2 (1205 aa).

Met-1 carries the N-acetylmethionine modification. The segment covering 1–22 has biased composition (low complexity); that stretch reads MEPGPARPRLAPAARPGWGRAA. The interval 1 to 102 is disordered; the sequence is MEPGPARPRL…AAAAAAAAAA (102 aa). Over 1-279 the chain is Cytoplasmic; that stretch reads MEPGPARPRL…AESKGVVKFG (279 aa). Positions 23-35 are enriched in basic residues; it reads GCRRRGGPARHGR. Ser-74 and Ser-76 each carry phosphoserine. The RFXV motif 1 motif lies at 77-80; that stretch reads RFQV. Positions 87–102 are enriched in low complexity; sequence AGRAAAAAAAAAAAAA. Positions 133 to 136 match the RFXV motif 2 motif; the sequence is RFRV. A compositionally biased stretch (low complexity) spans 143-155; it reads ASSSADDSLSDAA. The disordered stretch occupies residues 143–187; it reads ASSSADDSLSDAAGVGGDGPNVSFQNGGDTVLSEGSSLHSGGGSG. A phosphothreonine mark is found at Thr-196, Thr-200, Thr-205, Thr-210, and Thr-223. A Phosphoserine modification is found at Ser-235. Phosphothreonine is present on Thr-259. Residues 280-309 form a discontinuously helical membrane-spanning segment; the sequence is WIKGVLVRCMLNIWGVMLFIRLSWIVGQAG. Leu-290 lines the Na(+) pocket. K(+) contacts are provided by Asn-291 and Ile-292. Trp-293 provides a ligand contact to Na(+). Chloride is bound by residues Gly-294, Val-295, and Met-296. A helical membrane pass occupies residues 310–329; that stretch reads IGLSVVVIAMATVVTTITGL. Residues 330-360 are Cytoplasmic-facing; it reads STSAIATNGFVRGGGAYYLISRSLGPEFGGA. A helical membrane pass occupies residues 361–388; that stretch reads IGLIFAFANAVAVAMYVVGFAETVVELL. Residue Phe-365 participates in chloride binding. K(+) is bound at residue Tyr-376. The Extracellular segment spans residues 389-398; that stretch reads KEHSILMIDE. Residues 399–422 form a helical membrane-spanning segment; sequence INDIRIIGAITVVILLGISVAGME. At 423–425 the chain is on the cytoplasmic side; it reads WEA. The chain crosses the membrane as a helical span at residues 426 to 447; it reads KAQIVLLVILLLAIADFVIGTF. Residues 448 to 479 are Extracellular-facing; it reads ISLESKKPKGFFGYKSEIFNENFGPDFREEET. A discontinuously helical membrane pass occupies residues 480 to 497; it reads FFSVFAIFFPAATGILAG. Pro-489, Ala-490, and Thr-492 together coordinate K(+). Positions 489 and 490 each coordinate chloride. 2 residues coordinate chloride: Gly-493 and Ile-494. The Cytoplasmic portion of the chain corresponds to 498-512; the sequence is ANISGDLADPQSAIP. A helical membrane pass occupies residues 513–534; the sequence is KGTLLAILITTVVYIGIAVSVG. At 535–591 the chain is on the extracellular side; sequence SCVVRDATGNVNDTITTELTNCTSAACKLNFDFSYCESNTCSYGLMNNFQVMSMVSG. 2 N-linked (GlcNAc...) asparagine glycosylation sites follow: Asn-546 and Asn-555. 2 disulfides stabilise this stretch: Cys-556–Cys-561 and Cys-570–Cys-575. Residues 592–616 traverse the membrane as a helical segment; the sequence is FAPLISAGIFSATLSSALASLVSAP. 3 residues coordinate Na(+): Ala-603, Ser-606, and Ser-607. Over 617 to 644 the chain is Cytoplasmic; it reads KIFQALCKDNIYPAFQMFAKGYGKNNEP. A run of 2 helical transmembrane segments spans residues 645 to 665 and 666 to 684; these read LRGY…AELN and VIAP…LINF. Positions 675 and 679 each coordinate chloride. Topologically, residues 685 to 707 are cytoplasmic; that stretch reads SVFHASLAKSPGWRPAFKYYNMW. 2 helical membrane-spanning segments follow: residues 708–725 and 726–738; these read ISLI…VINW and WAAL…VLGL. The Cytoplasmic portion of the chain corresponds to 739-1205; that stretch reads YIYVTYKKPD…NHQSVLTFYS (467 aa). A scissor helix region spans residues 754–771; the sequence is STQALTYLSALQHSIRLS. Phosphoserine is present on residues Ser-933 and Ser-937. Residues 953–986 are disordered; that stretch reads SDQDTCKSSGEKSITQKDEEEDGKTPTQPLLKKE. The residue at position 987 (Ser-987) is a Phosphoserine.

This sequence belongs to the SLC12A transporter family. As to quaternary structure, homodimer; adopts a domain-swap conformation at the scissor helices connecting the transmembrane domain and C-terminal domain. Phosphorylated at Thr-196, Thr-200 and Thr-205 by OXSR1/OSR1 and STK39/SPAK downstream of WNK kinases (WNK1, WNK2, WNK3 or WNK4), promoting its activity. Widely expressed. High expression found in the cochlea, cochlear lateral wall, and the choroid plexus. Lower expression found in the cerebellum and the cortex.

Its subcellular location is the basolateral cell membrane. The enzyme catalyses K(+)(out) + 2 chloride(out) + Na(+)(out) = K(+)(in) + 2 chloride(in) + Na(+)(in). Activated following phosphorylation by OXSR1/OSR1 and STK39/SPAK downstream of WNK kinases (WNK1, WNK2, WNK3 or WNK4). Inhibited by bumetanide and furosemide. Functionally, cation-chloride cotransporter which mediates the electroneutral transport of chloride, potassium and/or sodium ions across the membrane. Plays a vital role in the regulation of ionic balance and cell volume. This chain is Solute carrier family 12 member 2 (Slc12a2), found in Mus musculus (Mouse).